We begin with the raw amino-acid sequence, 91 residues long: Small ribosomal subunit protein uS15 (91 aa).

It belongs to the universal ribosomal protein uS15 family. In terms of assembly, part of the 30S ribosomal subunit. Forms a bridge to the 50S subunit in the 70S ribosome, contacting the 23S rRNA.

In terms of biological role, one of the primary rRNA binding proteins, it binds directly to 16S rRNA where it helps nucleate assembly of the platform of the 30S subunit by binding and bridging several RNA helices of the 16S rRNA. Its function is as follows. Forms an intersubunit bridge (bridge B4) with the 23S rRNA of the 50S subunit in the ribosome. This Rickettsia typhi (strain ATCC VR-144 / Wilmington) protein is Small ribosomal subunit protein uS15.